The primary structure comprises 394 residues: Elongation factor Tu (394 aa).

Residues 10–204 enclose the tr-type G domain; it reads KPHVNVGTIG…FLDSYIPEPE (195 aa). A G1 region spans residues 19 to 26; the sequence is GHVDHGKT. Residue 19–26 coordinates GTP; the sequence is GHVDHGKT. T26 provides a ligand contact to Mg(2+). Residues 60-64 are G2; the sequence is GITIN. The tract at residues 81-84 is G3; that stretch reads DCPG. GTP-binding positions include 81–85 and 136–139; these read DCPGH and NKCD. The tract at residues 136 to 139 is G4; it reads NKCD. Positions 174 to 176 are G5; the sequence is SAL.

This sequence belongs to the TRAFAC class translation factor GTPase superfamily. Classic translation factor GTPase family. EF-Tu/EF-1A subfamily. As to quaternary structure, monomer.

The protein localises to the cytoplasm. The catalysed reaction is GTP + H2O = GDP + phosphate + H(+). Functionally, GTP hydrolase that promotes the GTP-dependent binding of aminoacyl-tRNA to the A-site of ribosomes during protein biosynthesis. The protein is Elongation factor Tu of Salmonella arizonae (strain ATCC BAA-731 / CDC346-86 / RSK2980).